The primary structure comprises 588 residues: Aspartate--tRNA ligase (588 aa).

Glu-177 lines the L-aspartate pocket. Residues 201–204 (QLFK) form an aspartate region. Arg-223 lines the L-aspartate pocket. ATP contacts are provided by residues 223 to 225 (RDE) and Gln-232. An L-aspartate-binding site is contributed by His-451. Glu-485 serves as a coordination point for ATP. Residue Arg-492 participates in L-aspartate binding. 537–540 (GLDR) is a binding site for ATP.

This sequence belongs to the class-II aminoacyl-tRNA synthetase family. Type 1 subfamily. In terms of assembly, homodimer.

It is found in the cytoplasm. The catalysed reaction is tRNA(Asp) + L-aspartate + ATP = L-aspartyl-tRNA(Asp) + AMP + diphosphate. Its function is as follows. Catalyzes the attachment of L-aspartate to tRNA(Asp) in a two-step reaction: L-aspartate is first activated by ATP to form Asp-AMP and then transferred to the acceptor end of tRNA(Asp). This chain is Aspartate--tRNA ligase, found in Staphylococcus aureus (strain NCTC 8325 / PS 47).